The primary structure comprises 568 residues: Sulfite reductase [NADPH] hemoprotein beta-component (568 aa).

[4Fe-4S] cluster contacts are provided by C425, C431, C470, and C474. C474 contributes to the siroheme binding site.

It belongs to the nitrite and sulfite reductase 4Fe-4S domain family. In terms of assembly, alpha(8)-beta(8). The alpha component is a flavoprotein, the beta component is a hemoprotein. Siroheme serves as cofactor. It depends on [4Fe-4S] cluster as a cofactor.

It carries out the reaction hydrogen sulfide + 3 NADP(+) + 3 H2O = sulfite + 3 NADPH + 4 H(+). The protein operates within sulfur metabolism; hydrogen sulfide biosynthesis; hydrogen sulfide from sulfite (NADPH route): step 1/1. Component of the sulfite reductase complex that catalyzes the 6-electron reduction of sulfite to sulfide. This is one of several activities required for the biosynthesis of L-cysteine from sulfate. The protein is Sulfite reductase [NADPH] hemoprotein beta-component of Xanthomonas euvesicatoria pv. vesicatoria (strain 85-10) (Xanthomonas campestris pv. vesicatoria).